The primary structure comprises 86 residues: Omega-theraphotoxin-Hhn1b (86 aa).

Positions 1 to 21 (MKSIVFVALFGLALLAVVCSA) are cleaved as a signal peptide. A propeptide spanning residues 22 to 50 (SEDAHKELLKEVVRAMVVDKTDAVQAEER) is cleaved from the precursor. Disulfide bonds link Cys52–Cys66, Cys59–Cys71, and Cys65–Cys78.

The protein belongs to the neurotoxin 10 (Hwtx-1) family. 17 (Hntx-9) subfamily. In terms of tissue distribution, expressed by the venom gland.

Its subcellular location is the secreted. Functionally, ion channel inhibitor. This chain is Omega-theraphotoxin-Hhn1b, found in Cyriopagopus hainanus (Chinese bird spider).